Here is a 260-residue protein sequence, read N- to C-terminus: Triosephosphate isomerase (260 aa).

A substrate-binding site is contributed by 11-13 (NWK). H103 acts as the Electrophile in catalysis. The active-site Proton acceptor is the E175. Substrate is bound by residues G181, S220, and 241–242 (GG).

The protein belongs to the triosephosphate isomerase family. In terms of assembly, homodimer.

The protein localises to the cytoplasm. The catalysed reaction is D-glyceraldehyde 3-phosphate = dihydroxyacetone phosphate. It participates in carbohydrate biosynthesis; gluconeogenesis. The protein operates within carbohydrate degradation; glycolysis; D-glyceraldehyde 3-phosphate from glycerone phosphate: step 1/1. Functionally, involved in the gluconeogenesis. Catalyzes stereospecifically the conversion of dihydroxyacetone phosphate (DHAP) to D-glyceraldehyde-3-phosphate (G3P). This Shewanella amazonensis (strain ATCC BAA-1098 / SB2B) protein is Triosephosphate isomerase.